We begin with the raw amino-acid sequence, 337 residues long: Vacuolar protein sorting-associated protein 26B-B (337 aa).

Positions 313-337 (RFEGTSHPETRPQHSGAAALEQEHE) are disordered.

The protein belongs to the VPS26 family. As to quaternary structure, component of the heterotrimeric retromer cargo-selective complex (CSC) which is believed to associate with variable sorting nexins to form functionally distinct retromer complex variants.

It is found in the cytoplasm. The protein resides in the membrane. The protein localises to the endosome. Acts as a component of the retromer cargo-selective complex (CSC). The CSC is believed to be the core functional component of retromer or respective retromer complex variants acting to prevent missorting of selected transmembrane cargo proteins into the lysosomal degradation pathway. Retromer mediates retrograde transport of cargo proteins from endosomes to the trans-Golgi network (TGN). The chain is Vacuolar protein sorting-associated protein 26B-B (vps26b-b) from Xenopus laevis (African clawed frog).